Reading from the N-terminus, the 240-residue chain is Ribonuclease 3 (240 aa).

The RNase III domain occupies V10 to G136. E49 contacts Mg(2+). D53 is a catalytic residue. 2 residues coordinate Mg(2+): D122 and E125. E125 is an active-site residue. Residues D163–A231 enclose the DRBM domain. Residues T205–S240 form a disordered region. Residues Q219–A228 show a composition bias toward low complexity.

Belongs to the ribonuclease III family. As to quaternary structure, homodimer. Mg(2+) serves as cofactor.

Its subcellular location is the cytoplasm. The catalysed reaction is Endonucleolytic cleavage to 5'-phosphomonoester.. Functionally, digests double-stranded RNA. Involved in the processing of primary rRNA transcript to yield the immediate precursors to the large and small rRNAs (23S and 16S). Processes some mRNAs, and tRNAs when they are encoded in the rRNA operon. Processes pre-crRNA and tracrRNA of type II CRISPR loci if present in the organism. This Thermobifida fusca (strain YX) protein is Ribonuclease 3.